Consider the following 365-residue polypeptide: tRNA/tmRNA (uracil-C(5))-methyltransferase (365 aa).

S-adenosyl-L-methionine is bound by residues Gln189, Tyr217, Asn222, Glu238, and Asp298. Cys323 (nucleophile) is an active-site residue. The active-site Proton acceptor is the Glu357.

This sequence belongs to the class I-like SAM-binding methyltransferase superfamily. RNA M5U methyltransferase family. TrmA subfamily.

It catalyses the reaction uridine(54) in tRNA + S-adenosyl-L-methionine = 5-methyluridine(54) in tRNA + S-adenosyl-L-homocysteine + H(+). The enzyme catalyses uridine(341) in tmRNA + S-adenosyl-L-methionine = 5-methyluridine(341) in tmRNA + S-adenosyl-L-homocysteine + H(+). In terms of biological role, dual-specificity methyltransferase that catalyzes the formation of 5-methyluridine at position 54 (m5U54) in all tRNAs, and that of position 341 (m5U341) in tmRNA (transfer-mRNA). This Pasteurella multocida (strain Pm70) protein is tRNA/tmRNA (uracil-C(5))-methyltransferase.